Here is a 129-residue protein sequence, read N- to C-terminus: MAKRTARVKRRERKNVDKGVAHIRSTFNNTIVTITDVHGNALAWATAGAMGFKGSRKSTPFAAQMAAEKAAKDAMEHGVREVEVLVKGPGSGREAAIRQLQAAGLEVTAIKDVTPIPHNGCRPPKRRRV.

Belongs to the universal ribosomal protein uS11 family. As to quaternary structure, part of the 30S ribosomal subunit. Interacts with proteins S7 and S18. Binds to IF-3.

Its function is as follows. Located on the platform of the 30S subunit, it bridges several disparate RNA helices of the 16S rRNA. Forms part of the Shine-Dalgarno cleft in the 70S ribosome. In Symbiobacterium thermophilum (strain DSM 24528 / JCM 14929 / IAM 14863 / T), this protein is Small ribosomal subunit protein uS11.